Here is a 932-residue protein sequence, read N- to C-terminus: Chitin synthase regulatory factor 3 (932 aa).

The span at methionine 1–leucine 16 shows a compositional bias: basic and acidic residues. 3 disordered regions span residues methionine 1 to arginine 53, threonine 264 to proline 356, and glutamate 374 to valine 406. 3 stretches are compositionally biased toward polar residues: residues serine 35–arginine 53, aspartate 274–serine 285, and serine 308–serine 319. Positions lysine 337–aspartate 349 are enriched in basic and acidic residues. Position 393 is a phosphoserine (serine 393). Sel1-like repeat units lie at residues proline 638 to histidine 674, proline 675 to valine 710, valine 711 to glycine 747, valine 751 to tyrosine 788, alanine 789 to tyrosine 825, glycine 826 to leucine 863, and alanine 864 to phenylalanine 899. Residues arginine 905–methionine 932 form a disordered region.

This chain is Chitin synthase regulatory factor 3 (chr3), found in Schizosaccharomyces pombe (strain 972 / ATCC 24843) (Fission yeast).